The chain runs to 181 residues: Peptidyl-tRNA hydrolase (181 aa).

Position 14 (Y14) interacts with tRNA. H19 functions as the Proton acceptor in the catalytic mechanism. Y60, N62, and N108 together coordinate tRNA.

Belongs to the PTH family. In terms of assembly, monomer.

The protein resides in the cytoplasm. The catalysed reaction is an N-acyl-L-alpha-aminoacyl-tRNA + H2O = an N-acyl-L-amino acid + a tRNA + H(+). Functionally, hydrolyzes ribosome-free peptidyl-tRNAs (with 1 or more amino acids incorporated), which drop off the ribosome during protein synthesis, or as a result of ribosome stalling. Its function is as follows. Catalyzes the release of premature peptidyl moieties from peptidyl-tRNA molecules trapped in stalled 50S ribosomal subunits, and thus maintains levels of free tRNAs and 50S ribosomes. The sequence is that of Peptidyl-tRNA hydrolase from Metamycoplasma arthritidis (strain 158L3-1) (Mycoplasma arthritidis).